The sequence spans 491 residues: tRNA-2-methylthio-N(6)-dimethylallyladenosine synthase (491 aa).

Positions 3–119 (RSYQIRTYGC…LPTLLERARH (117 aa)) constitute an MTTase N-terminal domain. Cysteine 12, cysteine 48, cysteine 82, cysteine 156, cysteine 160, and cysteine 163 together coordinate [4Fe-4S] cluster. Residues 142 to 372 (RESAYSGWVS…IELQNQISWD (231 aa)) enclose the Radical SAM core domain. One can recognise a TRAM domain in the interval 375–446 (KELVGRSVEL…PHHLVADSEI (72 aa)).

It belongs to the methylthiotransferase family. MiaB subfamily. As to quaternary structure, monomer. Requires [4Fe-4S] cluster as cofactor.

It localises to the cytoplasm. It carries out the reaction N(6)-dimethylallyladenosine(37) in tRNA + (sulfur carrier)-SH + AH2 + 2 S-adenosyl-L-methionine = 2-methylsulfanyl-N(6)-dimethylallyladenosine(37) in tRNA + (sulfur carrier)-H + 5'-deoxyadenosine + L-methionine + A + S-adenosyl-L-homocysteine + 2 H(+). In terms of biological role, catalyzes the methylthiolation of N6-(dimethylallyl)adenosine (i(6)A), leading to the formation of 2-methylthio-N6-(dimethylallyl)adenosine (ms(2)i(6)A) at position 37 in tRNAs that read codons beginning with uridine. The protein is tRNA-2-methylthio-N(6)-dimethylallyladenosine synthase of Saccharopolyspora erythraea (strain ATCC 11635 / DSM 40517 / JCM 4748 / NBRC 13426 / NCIMB 8594 / NRRL 2338).